A 304-amino-acid chain; its full sequence is Non-specific ribonucleoside hydrolase RihC (304 aa).

The active site involves histidine 233.

It belongs to the IUNH family. RihC subfamily.

In terms of biological role, hydrolyzes both purine and pyrimidine ribonucleosides with a broad-substrate specificity. This is Non-specific ribonucleoside hydrolase RihC from Escherichia coli (strain 55989 / EAEC).